The chain runs to 236 residues: uncharacterized protein (236 aa).

The signal sequence occupies residues 1-26 (MTNTWNRLALLIFAVLSLLVAGELQA).

Belongs to the periplasmic pilus chaperone family.

Its subcellular location is the periplasm. Its function is as follows. Part of the elfADCG-ycbUVF fimbrial operon, which promotes adhesion of bacteria to different abiotic surfaces. Could be required for the biogenesis of fimbriae. This is an uncharacterized protein from Escherichia coli (strain K12).